A 327-amino-acid polypeptide reads, in one-letter code: Flotillin-like protein FloA (327 aa).

Transmembrane regions (helical) follow at residues 6–26 (VLFF…FTFV) and 28–48 (IMLW…TLVG).

It belongs to the flotillin-like FloA family. As to quaternary structure, homooligomerizes.

It is found in the cell membrane. The protein localises to the membrane raft. Its function is as follows. Found in functional membrane microdomains (FMM) that may be equivalent to eukaryotic membrane rafts. FMMs are highly dynamic and increase in number as cells age. Flotillins are thought to be important factors in membrane fluidity. The protein is Flotillin-like protein FloA of Priestia megaterium (strain DSM 319 / IMG 1521) (Bacillus megaterium).